Consider the following 605-residue polypeptide: SET domain-containing protein SNOG_11806 (605 aa).

The tract at residues 68 to 132 is disordered; sequence TLDLTGMKTP…SRKGTGGLRV (65 aa). Residues 75-89 show a composition bias toward polar residues; sequence KTPQPSRSPTVTRNV. Positions 104 to 115 are enriched in acidic residues; the sequence is ESADDDDDDLQD. An SET domain is found at 473 to 579; sequence PPVQIYRTAE…AGSEITVDYG (107 aa).

It belongs to the class V-like SAM-binding methyltransferase superfamily.

The chain is SET domain-containing protein SNOG_11806 from Phaeosphaeria nodorum (strain SN15 / ATCC MYA-4574 / FGSC 10173) (Glume blotch fungus).